A 238-amino-acid chain; its full sequence is Large ribosomal subunit protein bL17m (238 aa).

This sequence belongs to the bacterial ribosomal protein bL17 family. Component of the mitochondrial large ribosomal subunit (mt-LSU). Mature yeast 74S mitochondrial ribosomes consist of a small (37S) and a large (54S) subunit. The 37S small subunit contains a 15S ribosomal RNA (15S mt-rRNA) and 34 different proteins. The 54S large subunit contains a 21S rRNA (21S mt-rRNA) and 46 different proteins.

The protein localises to the mitochondrion. Component of the mitochondrial ribosome (mitoribosome), a dedicated translation machinery responsible for the synthesis of mitochondrial genome-encoded proteins, including at least some of the essential transmembrane subunits of the mitochondrial respiratory chain. The mitoribosomes are attached to the mitochondrial inner membrane and translation products are cotranslationally integrated into the membrane. In Saccharomyces cerevisiae (strain ATCC 204508 / S288c) (Baker's yeast), this protein is Large ribosomal subunit protein bL17m (MRPL8).